The primary structure comprises 328 residues: Tetraacyldisaccharide 4'-kinase (328 aa).

An ATP-binding site is contributed by 55-62; that stretch reads TAGGNGKT.

This sequence belongs to the LpxK family.

The enzyme catalyses a lipid A disaccharide + ATP = a lipid IVA + ADP + H(+). Its pathway is glycolipid biosynthesis; lipid IV(A) biosynthesis; lipid IV(A) from (3R)-3-hydroxytetradecanoyl-[acyl-carrier-protein] and UDP-N-acetyl-alpha-D-glucosamine: step 6/6. Transfers the gamma-phosphate of ATP to the 4'-position of a tetraacyldisaccharide 1-phosphate intermediate (termed DS-1-P) to form tetraacyldisaccharide 1,4'-bis-phosphate (lipid IVA). The protein is Tetraacyldisaccharide 4'-kinase of Yersinia pseudotuberculosis serotype I (strain IP32953).